We begin with the raw amino-acid sequence, 197 residues long: Transmembrane 4 L6 family member 5 (197 aa).

At 1–9 (MCTGKCARC) the chain is on the cytoplasmic side. The helical transmembrane segment at 10 to 30 (VGLSLITLCLVCIVANALLLV) threads the bilayer. The Extracellular segment spans residues 31–46 (PNGETSWTNTNHLSLQ). Residues 47 to 67 (VWLMGGFIGGGLMVLCPGIAA) form a helical membrane-spanning segment. Residues 68 to 90 (VRAGGKGCCGAGCCGNRCRMLRS) lie on the Cytoplasmic side of the membrane. Residues 91-111 (VFSSAFGVLGAIYCLSVSGAG) traverse the membrane as a helical segment. Residues 91–197 (VFSSAFGVLG…DCRKKQDTPH (107 aa)) are interaction with MTOR and CASTOR1. The Extracellular portion of the chain corresponds to 112-157 (LRNGPRCLMNGEWGYHFEDTAGAYLLNRTLWDRCEAPPRVVPWNVT). Residue 124–129 (WGYHFE) participates in L-arginine binding. Residues N138 and N155 are each glycosylated (N-linked (GlcNAc...) asparagine). Residues 158-178 (LFSLLVAASCLEIVLCGIQLV) traverse the membrane as a helical segment. Over 179 to 197 (NATIGVFCGDCRKKQDTPH) the chain is Cytoplasmic.

This sequence belongs to the L6 tetraspanin family. In terms of assembly, interacts with MTOR; the interaction is positively regulated by arginine and is negatively regulated by leucine. Interacts with SLC38A9. Interacts with SLC7A1; the interaction is negatively regulated by arginine. Interacts with CASTOR1; the interaction is positively regulated by leucine and is negatively regulated by arginine. Intestine. Overexpressed in pancreatic cancers.

The protein resides in the lysosome membrane. Its subcellular location is the cell membrane. Functionally, acts as a lysosomal membrane arginine sensor. Forms a complex with MTOR and SLC38A9 on lysosomal membranes in an arginine-regulated manner, leading to arginine efflux which enables the activation of mTORC1 which subsequently leads to RPS6KB1 and EIF4EBP1 phosphorylations. Facilitates cell cycle G1/S phase progression and the translocation of the CDK4-CCND1 complex into the nucleus. CDKN1B and RHOA/ROCK signaling activity are involved in TM4SF5-mediated acceleration of G1/S phase progression. In Homo sapiens (Human), this protein is Transmembrane 4 L6 family member 5 (TM4SF5).